We begin with the raw amino-acid sequence, 341 residues long: Adenylosuccinate synthetase (341 aa).

Residues glycine 12–lysine 18 and glycine 42–serine 44 each bind GTP. The active-site Proton acceptor is aspartate 13. 2 residues coordinate Mg(2+): aspartate 13 and glycine 42. Residues aspartate 13 to lysine 16, asparagine 40 to histidine 43, threonine 127, arginine 141, glutamine 179, threonine 194, and arginine 256 each bind IMP. The active-site Proton donor is the histidine 43. Valine 252–arginine 258 provides a ligand contact to substrate. GTP-binding positions include arginine 258, cysteine 284–aspartate 286, and serine 324–glycine 326.

This sequence belongs to the adenylosuccinate synthetase family. As to quaternary structure, homodimer. Requires Mg(2+) as cofactor.

It is found in the cytoplasm. It catalyses the reaction IMP + L-aspartate + GTP = N(6)-(1,2-dicarboxyethyl)-AMP + GDP + phosphate + 2 H(+). It functions in the pathway purine metabolism; AMP biosynthesis via de novo pathway; AMP from IMP: step 1/2. In terms of biological role, plays an important role in the de novo pathway of purine nucleotide biosynthesis. Catalyzes the first committed step in the biosynthesis of AMP from IMP. This is Adenylosuccinate synthetase from Methanosphaera stadtmanae (strain ATCC 43021 / DSM 3091 / JCM 11832 / MCB-3).